The following is a 75-amino-acid chain: Defense protein 6 (75 aa).

The N-terminal stretch at 1 to 20 (MKTCLVFAFFLVAVFAAVQA) is a signal peptide. Positions 21-32 (EENDSPQTLPRR) are excised as a propeptide. Cystine bridges form between Cys-44/Cys-63, Cys-49/Cys-68, and Cys-53/Cys-70.

It belongs to the invertebrate defensin family.

The protein localises to the secreted. Has antibacterial activity. This chain is Defense protein 6, found in Lonomia obliqua (Moth).